We begin with the raw amino-acid sequence, 1253 residues long: Cytoplasmic FMR1-interacting protein 1 (1253 aa).

The residue at position 583 (S583) is a Phosphoserine. Residues 724–732 (DKRLRSECK) are EIF4E-binding. T1234 is modified (phosphothreonine).

It belongs to the CYFIP family. As to quaternary structure, component of the WAVE1 complex composed of ABI2, CYFIP1 or CYFIP2, BRK1, NCKAP1 and WASF1/WAVE1. Within the complex, a heterodimer containing NCKAP1 and CYFIP1 interacts with a heterotrimer formed by WAVE1, ABI2 and BRK1. Component of the CYFIP1-EIF4E-FMR1 complex which is composed of CYFIP, EIF4E and FMR1. Interacts with FMR1 but does not bind to related proteins FXR1 or FXR2. Interaction with EIF4E stimulates FMR1 binding. Component of the WAVE2 complex composed of ABI1, CYFIP1/SRA1, NCKAP1/NAP1 (NCKAP1L/HEM1 in hematopoietic cells) and WASF2/WAVE2. Interacts with the active GTP-bound form of RAC1. Interacts through its C-terminus with the C-terminus of DPYSL2/CRMP2 which is necessary for DPYSL2-induced axon outgrowth. Interacts with NYAP1, NYAP2 and MYO16. Interacts with TMEM108 (via N-terminus); the interaction associates TMEM108 with the WAVE1 complex. In terms of tissue distribution, highly expressed in embryonic and adult developing nervous system.

It localises to the cytoplasm. The protein localises to the perinuclear region. The protein resides in the cell projection. It is found in the lamellipodium. Its subcellular location is the ruffle. It localises to the synapse. The protein localises to the synaptosome. Functionally, component of the CYFIP1-EIF4E-FMR1 complex which binds to the mRNA cap and mediates translational repression. In the CYFIP1-EIF4E-FMR1 complex this subunit is an adapter between EIF4E and FMR1. Promotes the translation repression activity of FMR1 in brain probably by mediating its association with EIF4E and mRNA. Regulates formation of membrane ruffles and lamellipodia. Plays a role in axon outgrowth. Binds to F-actin but not to RNA. Part of the WAVE complex that regulates actin filament reorganization via its interaction with the Arp2/3 complex. Actin remodeling activity is regulated by RAC1. Regulator of epithelial morphogenesis. May act as an invasion suppressor in cancers. As component of the WAVE1 complex, required for BDNF-NTRK2 endocytic trafficking and signaling from early endosomes. This Mus musculus (Mouse) protein is Cytoplasmic FMR1-interacting protein 1.